We begin with the raw amino-acid sequence, 538 residues long: Probable cytochrome P450 309a2 (538 aa).

Cys-483 is a heme binding site.

It belongs to the cytochrome P450 family. It depends on heme as a cofactor.

The protein resides in the endoplasmic reticulum membrane. It is found in the microsome membrane. Its function is as follows. May be involved in the metabolism of insect hormones and in the breakdown of synthetic insecticides. In Drosophila melanogaster (Fruit fly), this protein is Probable cytochrome P450 309a2 (Cyp309a2).